The following is a 77-amino-acid chain: QXPSTAELCKINSNACSVPFSXIPCQKXFLAACDRHDTCYHCGKHFGFKQDDCDDAFFRDMTALCAHGTDDEGXCPX.

Gln1 bears the Pyrrolidone carboxylic acid mark. The active site involves His36.

As to quaternary structure, heterodimer of an alpha and a beta chains; probably disulfide-linked. It depends on Ca(2+) as a cofactor. As to expression, expressed by the venom duct.

The protein localises to the secreted. The enzyme catalyses a 1,2-diacyl-sn-glycero-3-phosphocholine + H2O = a 1-acyl-sn-glycero-3-phosphocholine + a fatty acid + H(+). Inhibited by linoleoyl amide and MG14. Heterodimer: conodipine-M catalyzes the calcium-dependent hydrolysis of the 2-acyl groups in 3-sn-phosphoglycerides. This activity may be supported by the alpha chain. Conodipine-M inhibits the binding of isradipine (a ligand specific for L-type calcium channel) to L-type calcium channels. This chain is Conodipine-M alpha chain, found in Conus magus (Magical cone).